Here is a 199-residue protein sequence, read N- to C-terminus: Nucleoid occlusion factor SlmA (199 aa).

The HTH tetR-type domain occupies 11–71; the sequence is ERRQQVLTVL…ALIDNLEAHL (61 aa). A DNA-binding region (H-T-H motif) is located at residues 34-53; that stretch reads TTARIAAEVGVSEAALYRYY.

The protein belongs to the nucleoid occlusion factor SlmA family. In terms of assembly, homodimer. Interacts with FtsZ.

It is found in the cytoplasm. Its subcellular location is the nucleoid. Its function is as follows. Required for nucleoid occlusion (NO) phenomenon, which prevents Z-ring formation and cell division over the nucleoid. Acts as a DNA-associated cell division inhibitor that binds simultaneously chromosomal DNA and FtsZ, and disrupts the assembly of FtsZ polymers. SlmA-DNA-binding sequences (SBS) are dispersed on non-Ter regions of the chromosome, preventing FtsZ polymerization at these regions. In Pasteurella multocida (strain Pm70), this protein is Nucleoid occlusion factor SlmA.